Consider the following 274-residue polypeptide: Imidazole glycerol phosphate synthase subunit HisF (274 aa).

Catalysis depends on residues Asp-11 and Asp-134.

It belongs to the HisA/HisF family. As to quaternary structure, heterodimer of HisH and HisF.

It localises to the cytoplasm. It carries out the reaction 5-[(5-phospho-1-deoxy-D-ribulos-1-ylimino)methylamino]-1-(5-phospho-beta-D-ribosyl)imidazole-4-carboxamide + L-glutamine = D-erythro-1-(imidazol-4-yl)glycerol 3-phosphate + 5-amino-1-(5-phospho-beta-D-ribosyl)imidazole-4-carboxamide + L-glutamate + H(+). It functions in the pathway amino-acid biosynthesis; L-histidine biosynthesis; L-histidine from 5-phospho-alpha-D-ribose 1-diphosphate: step 5/9. In terms of biological role, IGPS catalyzes the conversion of PRFAR and glutamine to IGP, AICAR and glutamate. The HisF subunit catalyzes the cyclization activity that produces IGP and AICAR from PRFAR using the ammonia provided by the HisH subunit. The protein is Imidazole glycerol phosphate synthase subunit HisF of Methanosphaera stadtmanae (strain ATCC 43021 / DSM 3091 / JCM 11832 / MCB-3).